Here is a 255-residue protein sequence, read N- to C-terminus: uncharacterized protein (255 aa).

Residues Asn16 and Asn58 are each glycosylated (N-linked (GlcNAc...) asparagine; by host). Helical transmembrane passes span 72–92 (LIYS…TIYY) and 104–124 (LWYI…SHIC).

It is found in the membrane. This is an uncharacterized protein from Acanthamoeba polyphaga (Amoeba).